The following is a 428-amino-acid chain: tRNA modification GTPase MnmE (428 aa).

The (6S)-5-formyl-5,6,7,8-tetrahydrofolate site is built by Arg20, Glu76, and Arg116. Residues 212 to 351 (GFEVAIIGAP…LVEALQDRLL (140 aa)) enclose the TrmE-type G domain. Asn222 serves as a coordination point for K(+). Residues 222–227 (NAGKST), 241–247 (SEVAGTT), and 266–269 (DTAG) each bind GTP. Position 226 (Ser226) interacts with Mg(2+). Ser241, Val243, and Thr246 together coordinate K(+). Thr247 provides a ligand contact to Mg(2+). A (6S)-5-formyl-5,6,7,8-tetrahydrofolate-binding site is contributed by Lys428.

The protein belongs to the TRAFAC class TrmE-Era-EngA-EngB-Septin-like GTPase superfamily. TrmE GTPase family. In terms of assembly, homodimer. Heterotetramer of two MnmE and two MnmG subunits. K(+) serves as cofactor.

The protein resides in the cytoplasm. In terms of biological role, exhibits a very high intrinsic GTPase hydrolysis rate. Involved in the addition of a carboxymethylaminomethyl (cmnm) group at the wobble position (U34) of certain tRNAs, forming tRNA-cmnm(5)s(2)U34. This Cereibacter sphaeroides (strain ATCC 17025 / ATH 2.4.3) (Rhodobacter sphaeroides) protein is tRNA modification GTPase MnmE.